Consider the following 300-residue polypeptide: Porphobilinogen deaminase (300 aa).

Cys-239 bears the S-(dipyrrolylmethanemethyl)cysteine mark.

Belongs to the HMBS family. Monomer. The cofactor is dipyrromethane.

It catalyses the reaction 4 porphobilinogen + H2O = hydroxymethylbilane + 4 NH4(+). Its pathway is porphyrin-containing compound metabolism; protoporphyrin-IX biosynthesis; coproporphyrinogen-III from 5-aminolevulinate: step 2/4. Its function is as follows. Tetrapolymerization of the monopyrrole PBG into the hydroxymethylbilane pre-uroporphyrinogen in several discrete steps. The chain is Porphobilinogen deaminase from Francisella tularensis subsp. holarctica (strain OSU18).